A 688-amino-acid chain; its full sequence is Glycine--tRNA ligase beta subunit (688 aa).

This sequence belongs to the class-II aminoacyl-tRNA synthetase family. As to quaternary structure, tetramer of two alpha and two beta subunits.

The protein localises to the cytoplasm. The catalysed reaction is tRNA(Gly) + glycine + ATP = glycyl-tRNA(Gly) + AMP + diphosphate. This Psychromonas ingrahamii (strain DSM 17664 / CCUG 51855 / 37) protein is Glycine--tRNA ligase beta subunit.